The following is a 54-amino-acid chain: VTSYTLNEVVPLKDVVPEWVRIGFSATTGAEFAAHEVLSWSFHSELGGTSGSQK.

The protein belongs to the leguminous lectin family. In terms of assembly, tetramer of two alpha and two beta chains.

This is Lectin alpha chain from Lathyrus odoratus (Sweet pea).